The chain runs to 216 residues: ATP-dependent Clp protease proteolytic subunit 3 (216 aa).

Serine 120 acts as the Nucleophile in catalysis. Histidine 145 is a catalytic residue.

It belongs to the peptidase S14 family. As to quaternary structure, fourteen ClpP subunits assemble into 2 heptameric rings which stack back to back to give a disk-like structure with a central cavity, resembling the structure of eukaryotic proteasomes.

Its subcellular location is the cytoplasm. It catalyses the reaction Hydrolysis of proteins to small peptides in the presence of ATP and magnesium. alpha-casein is the usual test substrate. In the absence of ATP, only oligopeptides shorter than five residues are hydrolyzed (such as succinyl-Leu-Tyr-|-NHMec, and Leu-Tyr-Leu-|-Tyr-Trp, in which cleavage of the -Tyr-|-Leu- and -Tyr-|-Trp bonds also occurs).. Cleaves peptides in various proteins in a process that requires ATP hydrolysis. Has a chymotrypsin-like activity. Plays a major role in the degradation of misfolded proteins. The protein is ATP-dependent Clp protease proteolytic subunit 3 of Prochlorococcus marinus (strain SARG / CCMP1375 / SS120).